The following is a 100-amino-acid chain: UPF0213 protein YhbQ (100 aa).

The GIY-YIG domain occupies 2–77 (TPWFLYLIRT…KQLTKRQKER (76 aa)).

Belongs to the UPF0213 family.

The protein is UPF0213 protein YhbQ of Shigella dysenteriae serotype 1 (strain Sd197).